The following is a 103-amino-acid chain: Ig lambda chain C region (103 aa).

Residues 6–99 form the Ig-like domain; it reads PTITLFPPSK…NGTSITKTLK (94 aa). Cys-28 and Cys-85 form a disulfide bridge.

This chain is Ig lambda chain C region, found in Gallus gallus (Chicken).